A 354-amino-acid polypeptide reads, in one-letter code: Phospho-N-acetylmuramoyl-pentapeptide-transferase (354 aa).

10 consecutive transmembrane segments (helical) span residues 27 to 47 (ATLL…INML), 73 to 93 (TMGG…WMDV), 97 to 117 (LVWA…LDDY), 138 to 158 (FVVA…YVPV), 162 to 182 (LYVP…VGAG), 193 to 213 (GLAI…AYLA), 230 to 250 (AGEL…FLWF), 256 to 276 (AVFM…VIAV), 282 to 302 (IVLA…IVQV), and 331 to 351 (TVVI…LATL).

This sequence belongs to the glycosyltransferase 4 family. MraY subfamily. The cofactor is Mg(2+).

It is found in the cell inner membrane. It catalyses the reaction UDP-N-acetyl-alpha-D-muramoyl-L-alanyl-gamma-D-glutamyl-meso-2,6-diaminopimeloyl-D-alanyl-D-alanine + di-trans,octa-cis-undecaprenyl phosphate = di-trans,octa-cis-undecaprenyl diphospho-N-acetyl-alpha-D-muramoyl-L-alanyl-D-glutamyl-meso-2,6-diaminopimeloyl-D-alanyl-D-alanine + UMP. Its pathway is cell wall biogenesis; peptidoglycan biosynthesis. Catalyzes the initial step of the lipid cycle reactions in the biosynthesis of the cell wall peptidoglycan: transfers peptidoglycan precursor phospho-MurNAc-pentapeptide from UDP-MurNAc-pentapeptide onto the lipid carrier undecaprenyl phosphate, yielding undecaprenyl-pyrophosphoryl-MurNAc-pentapeptide, known as lipid I. The chain is Phospho-N-acetylmuramoyl-pentapeptide-transferase from Novosphingobium aromaticivorans (strain ATCC 700278 / DSM 12444 / CCUG 56034 / CIP 105152 / NBRC 16084 / F199).